A 187-amino-acid polypeptide reads, in one-letter code: Phosphatidylethanolamine-binding protein 1 (187 aa).

N-acetylalanine; in peptide hippocampal cholinergic neurostimulating is present on Ala-2. Residues Ser-6 and Ser-13 each carry the phosphoserine modification. A Phosphothreonine modification is found at Thr-42. Phosphoserine is present on residues Ser-52, Ser-54, Ser-98, and Ser-153. The tract at residues 93–134 is interaction with RAF1; it reads KGNDISSGTVLSEYVGSGPPKDTGLHRYVWLVYEQEQPLNCD.

The protein belongs to the phosphatidylethanolamine-binding protein family. Has a tendency to form dimers by disulfide cross-linking. Interacts with RAF1 and this interaction is enhanced if RAF1 is phosphorylated on residues 'Ser-338', 'Ser-339', 'Tyr-340' and 'Tyr-341'. Interacts with ALOX15; in response to IL13/interleukin-13, prevents the interaction of PEBP1 with RAF1 to activate the ERK signaling cascade. As to expression, major component of epididymal secretions and sperm plasma membranes. It is present in cytosols from a variety of other tissues. Highly expressed in brain.

The protein localises to the cytoplasm. Its subcellular location is the membrane. Binds ATP, opioids and phosphatidylethanolamine. Has lower affinity for phosphatidylinositol and phosphatidylcholine. Serine protease inhibitor which inhibits thrombin, neuropsin and chymotrypsin but not trypsin, tissue type plasminogen activator and elastase. Inhibits the kinase activity of RAF1 by inhibiting its activation and by dissociating the RAF1/MEK complex and acting as a competitive inhibitor of MEK phosphorylation. Functionally, HCNP may be involved in the function of the presynaptic cholinergic neurons of the central nervous system. HCNP increases the production of choline acetyltransferase but not acetylcholinesterase. Seems to be mediated by a specific receptor. This Rattus norvegicus (Rat) protein is Phosphatidylethanolamine-binding protein 1 (Pebp1).